A 556-amino-acid chain; its full sequence is F-box protein YDR131C (556 aa).

One can recognise an F-box domain in the interval 1–44 (MFDKLPYEIFKQIAWRIPQEDKISLTYVCKRSYESIIPFIYQNL).

Interacts with SKP1. Component of the probable SCF(YDR131C) complex containing CDC53, SKP1, RBX1 and YDR131C.

Its subcellular location is the vacuole. It participates in protein modification; protein ubiquitination. Its function is as follows. Substrate recognition component of a SCF (SKP1-CUL1-F-box protein) E3 ubiquitin-protein ligase complex which mediates the ubiquitination and subsequent proteasomal degradation of target proteins. Probably recognizes and binds to phosphorylated target proteins. The polypeptide is F-box protein YDR131C (Saccharomyces cerevisiae (strain ATCC 204508 / S288c) (Baker's yeast)).